Reading from the N-terminus, the 157-residue chain is Small ribosomal subunit protein uS7 (157 aa).

It belongs to the universal ribosomal protein uS7 family. In terms of assembly, part of the 30S ribosomal subunit. Contacts proteins S9 and S11.

One of the primary rRNA binding proteins, it binds directly to 16S rRNA where it nucleates assembly of the head domain of the 30S subunit. Is located at the subunit interface close to the decoding center, probably blocks exit of the E-site tRNA. The sequence is that of Small ribosomal subunit protein uS7 from Leptospira borgpetersenii serovar Hardjo-bovis (strain JB197).